The chain runs to 297 residues: uncharacterized protein (297 aa).

The 60-residue stretch at Met1 to Thr60 folds into the HTH lysR-type domain. The H-T-H motif DNA-binding region spans Phe20 to Ala40.

Belongs to the LysR transcriptional regulatory family.

This is an uncharacterized protein from Escherichia coli (strain K12).